A 410-amino-acid polypeptide reads, in one-letter code: Zinc finger TRAF-type-containing protein 1 (410 aa).

Residues 1–13 (MSGAEEAGGGGPA) are compositionally biased toward gly residues. Residues 1–22 (MSGAEEAGGGGPAAGPAGSVPA) form a disordered region. Residues 117-162 (CTVCLDLPKASVYQCTNGHLMCAGCFIHLLADARLKEEQATCPNCR) form an RING-type; degenerate zinc finger. The TRAF-type zinc-finger motif lies at 158–231 (CPNCRCEISK…PWHGPFHELT (74 aa)).

The protein belongs to the ZFTRAF1 family. As to quaternary structure, interacts with LGALS3.

The protein localises to the cytoplasm. It is found in the perinuclear region. In Bos taurus (Bovine), this protein is Zinc finger TRAF-type-containing protein 1.